Here is a 264-residue protein sequence, read N- to C-terminus: Movement protein (264 aa).

Residues 210–219 (FRTKPSKRGP) are compositionally biased toward basic residues. Positions 210-264 (FRTKPSKRGPKNNNNLGKGRSGGRPKPKSFDEVEKEFDNLIEDEAETSVADSDSY) are disordered. Positions 237–247 (KSFDEVEKEFD) are enriched in basic and acidic residues.

It belongs to the tobamovirus movement protein family. As to quaternary structure, binds to host RBCS at the plasmodesmata; this interaction seems required for viral systemic movement. In resistant plants, interacts with host MBP2C at host microtubules; this interaction prevents virus cell to cell movement. In resistant plants, interacts with host resistance (R) protein (e.g. tomato ToMV resistance protein TM-2(2), AC Q71BG9) at the host plasma membrane; this interaction triggers host defense responses leading to programmed cell death.

It localises to the host cytoplasm. Its subcellular location is the host cytoskeleton. It is found in the host cell junction. The protein resides in the host plasmodesma. Functionally, transports viral genome to neighboring plant cells directly through plasmosdesmata, without any budding. The movement protein allows efficient cell to cell propagation, by bypassing the host cell wall barrier. Forms a ribonucleoprotein complex with viral RNA. Binds microtubules and modulates microtubule stability. Can bind double-stranded DNA. Triggers host hypersensitive defense reaction in incompatible plants harboring resistance (R) proteins. The chain is Movement protein (MP) from Tomato mosaic virus (strain LII) (ToMV).